We begin with the raw amino-acid sequence, 565 residues long: Probable peptidoglycan D,D-transpeptidase PbpC (565 aa).

The helical transmembrane segment at 10-30 (FILVVTLFVLASLAVSGRLVY) threads the bilayer. The active-site Acyl-ester intermediate is the S289.

The protein belongs to the transpeptidase family. FtsI subfamily.

Its subcellular location is the cell inner membrane. It carries out the reaction Preferential cleavage: (Ac)2-L-Lys-D-Ala-|-D-Ala. Also transpeptidation of peptidyl-alanyl moieties that are N-acyl substituents of D-alanine.. It participates in cell wall biogenesis; peptidoglycan biosynthesis. Catalyzes cross-linking of the peptidoglycan cell wall at the division septum. Binds penicillin. The sequence is that of Probable peptidoglycan D,D-transpeptidase PbpC from Pseudomonas aeruginosa (strain ATCC 15692 / DSM 22644 / CIP 104116 / JCM 14847 / LMG 12228 / 1C / PRS 101 / PAO1).